A 307-amino-acid chain; its full sequence is MSLPKIAISVGDINGVGIEIALKSHDEIKNICSPIYFINNELLNSAANILKFTVPNDFEIFECGSSFNIKPGRVSKKSGKFSFVSFENAILYTQNKRAQALVTMPINKESWKKAGVPYVGHTDALGKYFGKNAIMMLGCEELFVALYTDHLALKDVSAKIKAKNLALFLVDFYNSSKFENIGVLGFNPHASDNETIGGKEEKEIIKAIKSANNRLKKEVFTGPLVPDAAFTKSSLKRCNRLVSMYHDVGLAPLKALYFDKSINVSLNLPIVRTSVDHGTAFDIAYKGKAETKSYIEAIKFAIKLCDY.

Substrate is bound by residues H121 and T122. A divalent metal cation contacts are provided by H150, H189, and H246. Residues K254, N263, and R272 each contribute to the substrate site.

It belongs to the PdxA family. Homodimer. The cofactor is Zn(2+). Mg(2+) is required as a cofactor. Requires Co(2+) as cofactor.

It localises to the cytoplasm. It carries out the reaction 4-(phosphooxy)-L-threonine + NAD(+) = 3-amino-2-oxopropyl phosphate + CO2 + NADH. It participates in cofactor biosynthesis; pyridoxine 5'-phosphate biosynthesis; pyridoxine 5'-phosphate from D-erythrose 4-phosphate: step 4/5. Functionally, catalyzes the NAD(P)-dependent oxidation of 4-(phosphooxy)-L-threonine (HTP) into 2-amino-3-oxo-4-(phosphooxy)butyric acid which spontaneously decarboxylates to form 3-amino-2-oxopropyl phosphate (AHAP). The chain is 4-hydroxythreonine-4-phosphate dehydrogenase from Campylobacter fetus subsp. fetus (strain 82-40).